Consider the following 151-residue polypeptide: Deoxyuridine 5'-triphosphate nucleotidohydrolase (151 aa).

Substrate contacts are provided by residues 70–72, Asn-83, 87–89, and Met-97; these read RSG and LID.

It belongs to the dUTPase family. The cofactor is Mg(2+).

It catalyses the reaction dUTP + H2O = dUMP + diphosphate + H(+). Its pathway is pyrimidine metabolism; dUMP biosynthesis; dUMP from dCTP (dUTP route): step 2/2. Functionally, this enzyme is involved in nucleotide metabolism: it produces dUMP, the immediate precursor of thymidine nucleotides and it decreases the intracellular concentration of dUTP so that uracil cannot be incorporated into DNA. This Pseudomonas syringae pv. tomato (strain ATCC BAA-871 / DC3000) protein is Deoxyuridine 5'-triphosphate nucleotidohydrolase.